We begin with the raw amino-acid sequence, 159 residues long: uncharacterized protein (159 aa).

Helical transmembrane passes span 76 to 96 (AIKY…FIGK), 104 to 124 (IVML…FSPT), and 131 to 151 (FGAG…VIGG).

It is found in the membrane. This is an uncharacterized protein from Acanthamoeba polyphaga (Amoeba).